The primary structure comprises 307 residues: tRNA dimethylallyltransferase (307 aa).

6-13 (GATATGKT) contacts ATP. 8–13 (TATGKT) is a binding site for substrate. The tract at residues 31–34 (DSMM) is interaction with substrate tRNA.

Belongs to the IPP transferase family. Monomer. Mg(2+) is required as a cofactor.

The catalysed reaction is adenosine(37) in tRNA + dimethylallyl diphosphate = N(6)-dimethylallyladenosine(37) in tRNA + diphosphate. Functionally, catalyzes the transfer of a dimethylallyl group onto the adenine at position 37 in tRNAs that read codons beginning with uridine, leading to the formation of N6-(dimethylallyl)adenosine (i(6)A). The protein is tRNA dimethylallyltransferase of Sulfurihydrogenibium sp. (strain YO3AOP1).